Here is a 247-residue protein sequence, read N- to C-terminus: Segregation and condensation protein A (247 aa).

This sequence belongs to the ScpA family. In terms of assembly, component of a cohesin-like complex composed of ScpA, ScpB and the Smc homodimer, in which ScpA and ScpB bind to the head domain of Smc. The presence of the three proteins is required for the association of the complex with DNA.

It localises to the cytoplasm. Its function is as follows. Participates in chromosomal partition during cell division. May act via the formation of a condensin-like complex containing Smc and ScpB that pull DNA away from mid-cell into both cell halves. The protein is Segregation and condensation protein A of Bacillus cereus (strain 03BB102).